Reading from the N-terminus, the 88-residue chain is Small ribosomal subunit protein bS16 (88 aa).

Belongs to the bacterial ribosomal protein bS16 family.

The sequence is that of Small ribosomal subunit protein bS16 from Geobacter sulfurreducens (strain ATCC 51573 / DSM 12127 / PCA).